Here is a 473-residue protein sequence, read N- to C-terminus: Sucrose-6-phosphate hydrolase (473 aa).

Substrate is bound by residues 44–47 (LLND), Q63, 106–107 (YS), 167–168 (RD), and E224. Residue D47 is part of the active site.

The protein belongs to the glycosyl hydrolase 32 family.

The protein resides in the cytoplasm. It catalyses the reaction Hydrolysis of terminal non-reducing beta-D-fructofuranoside residues in beta-D-fructofuranosides.. It functions in the pathway glycan biosynthesis; sucrose metabolism. The polypeptide is Sucrose-6-phosphate hydrolase (scrB) (Lactococcus lactis subsp. lactis (Streptococcus lactis)).